Consider the following 160-residue polypeptide: MRCPFCGHADTQVVDSRVSEEGDTIRRRRRCLSCDKRFTTYERVELAMPTVVKRDGSRSEYDAAKLRGSLALALRKRPVSTEEVDGAVARIEDTLLASGAREVASEHIGELVMNELKRLDKVAYVRFASVYKSFEDIGEFVEAIREMQGPRLGAGKLRKE.

The segment at 3 to 34 is a zinc-finger region; that stretch reads CPFCGHADTQVVDSRVSEEGDTIRRRRRCLSC. In terms of domain architecture, ATP-cone spans 49–139; sequence PTVVKRDGSR…VYKSFEDIGE (91 aa).

This sequence belongs to the NrdR family. The cofactor is Zn(2+).

Its function is as follows. Negatively regulates transcription of bacterial ribonucleotide reductase nrd genes and operons by binding to NrdR-boxes. The polypeptide is Transcriptional repressor NrdR (Bordetella avium (strain 197N)).